A 187-amino-acid chain; its full sequence is NADH-quinone oxidoreductase subunit B (187 aa).

Positions 66, 67, 131, and 161 each coordinate [4Fe-4S] cluster.

Belongs to the complex I 20 kDa subunit family. In terms of assembly, NDH-1 is composed of 14 different subunits. Subunits NuoB, C, D, E, F, and G constitute the peripheral sector of the complex. [4Fe-4S] cluster is required as a cofactor.

Its subcellular location is the cell inner membrane. It catalyses the reaction a quinone + NADH + 5 H(+)(in) = a quinol + NAD(+) + 4 H(+)(out). NDH-1 shuttles electrons from NADH, via FMN and iron-sulfur (Fe-S) centers, to quinones in the respiratory chain. Couples the redox reaction to proton translocation (for every two electrons transferred, four hydrogen ions are translocated across the cytoplasmic membrane), and thus conserves the redox energy in a proton gradient. The protein is NADH-quinone oxidoreductase subunit B of Rhizorhabdus wittichii (strain DSM 6014 / CCUG 31198 / JCM 15750 / NBRC 105917 / EY 4224 / RW1) (Sphingomonas wittichii).